The following is a 200-amino-acid chain: Imidazoleglycerol-phosphate dehydratase (200 aa).

This sequence belongs to the imidazoleglycerol-phosphate dehydratase family.

It localises to the cytoplasm. The enzyme catalyses D-erythro-1-(imidazol-4-yl)glycerol 3-phosphate = 3-(imidazol-4-yl)-2-oxopropyl phosphate + H2O. The protein operates within amino-acid biosynthesis; L-histidine biosynthesis; L-histidine from 5-phospho-alpha-D-ribose 1-diphosphate: step 6/9. The polypeptide is Imidazoleglycerol-phosphate dehydratase (Chlorobium luteolum (strain DSM 273 / BCRC 81028 / 2530) (Pelodictyon luteolum)).